The primary structure comprises 433 residues: Protein disulfide-isomerase A6 homolog (433 aa).

Positions 1–19 (MRQLASILLLAFVVGSVSA) are cleaved as a signal peptide. Thioredoxin domains lie at 20 to 119 (FYSP…GQRT) and 120 to 267 (AKAI…KHVA). Active-site nucleophile residues include cysteine 55, cysteine 58, cysteine 186, and cysteine 189. Disulfide bonds link cysteine 55–cysteine 58 and cysteine 186–cysteine 189. N-linked (GlcNAc...) asparagine glycosylation is present at asparagine 279. The tract at residues 405–433 (VDPWDGKDGQLPTEEDIDLSDIDLDKDEL) is disordered. The segment covering 417–433 (TEEDIDLSDIDLDKDEL) has biased composition (acidic residues). Residues 430-433 (KDEL) carry the Prevents secretion from ER motif.

The protein belongs to the protein disulfide isomerase family. As to quaternary structure, interacts with Drpr (via extracellular region). In terms of tissue distribution, in the blastoderm embryo, expression starts at the anterior and posterior poles and later appears as broad stripes. Following gastrulation, expressed in midline precursor cells and the posterior head with low levels present throughout the embryo. During germ band extension, weak dorsoventral stripes of expression are evident. Midline expression begins and is retained throughout embryogenesis in clusters of cells in each segment in the central nervous system. At least some of the midline expression occurs in VUM neurons.

The protein localises to the endoplasmic reticulum lumen. It localises to the cell surface. The enzyme catalyses Catalyzes the rearrangement of -S-S- bonds in proteins.. Its function is as follows. Binds to both apoptotic cells and phagocytes and promotes Drpr-dependent phagocytosis of apoptotic cells. The polypeptide is Protein disulfide-isomerase A6 homolog (Drosophila melanogaster (Fruit fly)).